The sequence spans 210 residues: Na(+)-translocating NADH-quinone reductase subunit D (210 aa).

6 helical membrane passes run 10–30, 42–62, 72–92, 103–123, 131–151, and 178–198; these read ILFAPFLDNNPIALQVLGVCS, FVMTLAVMFVTAFSNLFVSLI, IIVQMAIIASLVIVVDQVLKA, VFVGLIITNCIVMGRAEAYAM, FIDGVGNGLGYGFVLITVAFF, and NGLMLLAPSAFFLIGFMIWAI.

The protein belongs to the NqrDE/RnfAE family. In terms of assembly, composed of six subunits; NqrA, NqrB, NqrC, NqrD, NqrE and NqrF.

The protein resides in the cell inner membrane. The enzyme catalyses a ubiquinone + n Na(+)(in) + NADH + H(+) = a ubiquinol + n Na(+)(out) + NAD(+). NQR complex catalyzes the reduction of ubiquinone-1 to ubiquinol by two successive reactions, coupled with the transport of Na(+) ions from the cytoplasm to the periplasm. NqrA to NqrE are probably involved in the second step, the conversion of ubisemiquinone to ubiquinol. This Photobacterium profundum (strain SS9) protein is Na(+)-translocating NADH-quinone reductase subunit D.